The chain runs to 202 residues: Small ribosomal subunit protein uS4 (202 aa).

The 78-residue stretch at 91–168 (SMLSSVLYNS…QKVPDYLEVD (78 aa)) folds into the S4 RNA-binding domain.

It belongs to the universal ribosomal protein uS4 family. Part of the 30S ribosomal subunit. Contacts protein S5. The interaction surface between S4 and S5 is involved in control of translational fidelity.

One of the primary rRNA binding proteins, it binds directly to 16S rRNA where it nucleates assembly of the body of the 30S subunit. In terms of biological role, with S5 and S12 plays an important role in translational accuracy. This chain is Small ribosomal subunit protein uS4, found in Ehrlichia ruminantium (strain Welgevonden).